A 428-amino-acid chain; its full sequence is Adenylosuccinate synthetase (428 aa).

Residues glycine 12–lysine 18 and glycine 40–threonine 42 contribute to the GTP site. Aspartate 13 functions as the Proton acceptor in the catalytic mechanism. Positions 13 and 40 each coordinate Mg(2+). IMP is bound by residues aspartate 13–lysine 16, asparagine 38–histidine 41, threonine 129, arginine 143, glutamine 224, threonine 239, and arginine 303. The Proton donor role is filled by histidine 41. Substrate is bound at residue valine 299 to arginine 305. GTP contacts are provided by residues arginine 305, lysine 331 to aspartate 333, and alanine 410 to glycine 412.

It belongs to the adenylosuccinate synthetase family. Homodimer. The cofactor is Mg(2+).

It localises to the cytoplasm. The enzyme catalyses IMP + L-aspartate + GTP = N(6)-(1,2-dicarboxyethyl)-AMP + GDP + phosphate + 2 H(+). The protein operates within purine metabolism; AMP biosynthesis via de novo pathway; AMP from IMP: step 1/2. In terms of biological role, plays an important role in the de novo pathway of purine nucleotide biosynthesis. Catalyzes the first committed step in the biosynthesis of AMP from IMP. The protein is Adenylosuccinate synthetase of Francisella tularensis subsp. holarctica (strain FTNF002-00 / FTA).